Reading from the N-terminus, the 103-residue chain is Small ribosomal subunit protein uS10 (103 aa).

Belongs to the universal ribosomal protein uS10 family. Part of the 30S ribosomal subunit.

Functionally, involved in the binding of tRNA to the ribosomes. In Psychromonas ingrahamii (strain DSM 17664 / CCUG 51855 / 37), this protein is Small ribosomal subunit protein uS10.